The chain runs to 65 residues: Beta-defensin 106A (65 aa).

A signal peptide spans M1–A20. Disulfide bonds link C26/C53, C33/C47, and C37/C54.

The protein belongs to the beta-defensin family. In terms of assembly, monomer. Interacts with CCR2 (via extracellular N-terminal region); this interaction may preferentially require specific tyrosine sulfation on CCR2.

The protein resides in the secreted. The protein localises to the membrane. Functionally, has antibacterial activity. Acts as a ligand for C-C chemokine receptor CCR2. This chain is Beta-defensin 106A (DEFB106A), found in Hylobates lar (Lar gibbon).